The sequence spans 467 residues: Neutrophil collagenase (467 aa).

Positions Met-1–Ala-20 are cleaved as a signal peptide. Positions Phe-21–Met-100 are cleaved as a propeptide — activation peptide. 2 N-linked (GlcNAc...) asparagine glycosylation sites follow: Asn-54 and Asn-73. The short motif at Pro-89–Ser-96 is the Cysteine switch element. Position 91 (Cys-91) interacts with Zn(2+). The N-linked (GlcNAc...) asparagine glycan is linked to Asn-112. Asp-157 contacts Ca(2+). Zn(2+) is bound by residues His-167 and Asp-169. Residues Asp-174, Gly-175, Asn-177, and Ile-179 each coordinate Ca(2+). His-182 provides a ligand contact to Zn(2+). The Ca(2+) site is built by Gly-189, Gly-191, and Asp-193. His-195 contributes to the Zn(2+) binding site. The Ca(2+) site is built by Asp-197 and Glu-200. Asn-204 carries an N-linked (GlcNAc...) asparagine glycan. Residue His-217 participates in Zn(2+) binding. Glu-218 is an active-site residue. The Zn(2+) site is built by His-221 and His-227. Residue Asn-246 is glycosylated (N-linked (GlcNAc...) asparagine). Hemopexin repeat units follow at residues Pro-276–Leu-325, Pro-326–Ser-372, Val-374–Ile-420, and Glu-421–Cys-464. Cys-279 and Cys-464 are disulfide-bonded. Asp-286 is a binding site for Ca(2+). Ca(2+) is bound by residues Asp-378 and Asp-425.

The protein belongs to the peptidase M10A family. Ca(2+) is required as a cofactor. Zn(2+) serves as cofactor. Neutrophils.

The protein resides in the cytoplasmic granule. Its subcellular location is the secreted. It localises to the extracellular space. It is found in the extracellular matrix. The catalysed reaction is Cleavage of interstitial collagens in the triple helical domain. Unlike EC 3.4.24.7, this enzyme cleaves type III collagen more slowly than type I.. Its activity is regulated as follows. Cannot be activated without removal of the activation peptide. Functionally, can degrade fibrillar type I, II, and III collagens. The chain is Neutrophil collagenase (MMP8) from Homo sapiens (Human).